The sequence spans 224 residues: Prolactin-2C3 (224 aa).

Positions 1–29 (MLPSSIQPCSWILLLLLVNSSLLWKNVAS) are cleaved as a signal peptide. The N-linked (GlcNAc...) asparagine glycan is linked to asparagine 19. A disulfide bond links cysteine 33 and cysteine 40. N-linked (GlcNAc...) asparagine glycans are attached at residues asparagine 57, asparagine 75, and asparagine 88. 2 cysteine pairs are disulfide-bonded: cysteine 87–cysteine 199 and cysteine 216–cysteine 224.

Belongs to the somatotropin/prolactin family. In terms of processing, N-glycosylated and sialylated. Expressed in placenta and hair follicles, with highest expression levels detected in the outer root sheath and no expression detected in bulb. Expressed in placenta, skin wounds, keratinocytes and weakly in embryonic fibroblasts. Expressed in brain, cerebellum and in Neuro-2a cell line. Not detected in liver, kidney, ovary, pituitary gland and brain.

It localises to the secreted. The protein resides in the endoplasmic reticulum. In terms of biological role, may have a role in embryonic development. It is likely to provide a growth stimulus to target cells in maternal and fetal tissues during the development of the embryo at mid-gestation. May play a role during wound healing and in the hair follicle cycle as a growth factor and/or an angiogenesis factor. May play a role in microvilli formation and cell proliferation of neuroblastoma cells. The sequence is that of Prolactin-2C3 (Prl2c3) from Mus musculus (Mouse).